The sequence spans 175 residues: Transcription factor E (175 aa).

Residues 8-90 form the HTH TFE/IIEalpha-type domain; sequence NDPVIQKYLH…LWTFQYENIP (83 aa).

It belongs to the TFE family. In terms of assembly, monomer. Interaction with RNA polymerase subunits RpoF and RpoE is necessary for Tfe stimulatory transcription activity. Able to interact with Tbp and RNA polymerase in the absence of DNA promoter. Interacts both with the preinitiation and elongation complexes.

Its function is as follows. Transcription factor that plays a role in the activation of archaeal genes transcribed by RNA polymerase. Facilitates transcription initiation by enhancing TATA-box recognition by TATA-box-binding protein (Tbp), and transcription factor B (Tfb) and RNA polymerase recruitment. Not absolutely required for transcription in vitro, but particularly important in cases where Tbp or Tfb function is not optimal. It dynamically alters the nucleic acid-binding properties of RNA polymerases by stabilizing the initiation complex and destabilizing elongation complexes. Seems to translocate with the RNA polymerase following initiation and acts by binding to the non template strand of the transcription bubble in elongation complexes. In Natronomonas pharaonis (strain ATCC 35678 / DSM 2160 / CIP 103997 / JCM 8858 / NBRC 14720 / NCIMB 2260 / Gabara) (Halobacterium pharaonis), this protein is Transcription factor E.